Here is a 146-residue protein sequence, read N- to C-terminus: VHLTADEKTAVTTLWGKVNVEEVGGEALGRLLVVYPWTQRFFESFGDLSSADAIMGNPKVKAHGKKVLNSFSEGLKNLDNLKGTFAKLSELHCDKLHVDPENFRLLGNVLVCVLAHHFGKEFTPPVQAAYQKVVAGVANALAHKYH.

N-acetylvaline is present on V1. The 145-residue stretch at 2-146 (HLTADEKTAV…VANALAHKYH (145 aa)) folds into the Globin domain. At T12 the chain carries Phosphothreonine. S44 carries the post-translational modification Phosphoserine. Position 59 is an N6-acetyllysine (K59). H63 contributes to the heme b binding site. N6-acetyllysine is present on K82. H92 contributes to the heme b binding site. An S-nitrosocysteine modification is found at C93. N6-acetyllysine is present on K144.

This sequence belongs to the globin family. In terms of assembly, heterotetramer of two alpha chains and two beta chains. In terms of tissue distribution, red blood cells.

Involved in oxygen transport from the lung to the various peripheral tissues. The chain is Hemoglobin subunit beta (HBB) from Procyon lotor (Raccoon).